The sequence spans 254 residues: Urease accessory protein UreD (254 aa).

This sequence belongs to the UreD family. In terms of assembly, ureD, UreF and UreG form a complex that acts as a GTP-hydrolysis-dependent molecular chaperone, activating the urease apoprotein by helping to assemble the nickel containing metallocenter of UreC. The UreE protein probably delivers the nickel.

It is found in the cytoplasm. Its function is as follows. Required for maturation of urease via the functional incorporation of the urease nickel metallocenter. The chain is Urease accessory protein UreD from Streptomyces coelicolor (strain ATCC BAA-471 / A3(2) / M145).